We begin with the raw amino-acid sequence, 51 residues long: Large ribosomal subunit protein eL39 (51 aa).

The interval 32 to 51 is disordered; the sequence is KGSVKQHPKMRHWRRKNLKK. Residues 33–51 show a composition bias toward basic residues; that stretch reads GSVKQHPKMRHWRRKNLKK.

Belongs to the eukaryotic ribosomal protein eL39 family.

The protein is Large ribosomal subunit protein eL39 of Methanococcus maripaludis (strain C5 / ATCC BAA-1333).